The chain runs to 416 residues: Glyceraldehyde-3-phosphate dehydrogenase, chloroplastic (416 aa).

Residues 1–78 (MAFVAPVSSV…APARTSNAPS (78 aa)) constitute a chloroplast transit peptide. NADP(+) contacts are provided by residues 90 to 91 (RI), Asp114, and Arg158. Residues 232 to 234 (SCT), Thr263, Arg278, 291 to 292 (TG), and Arg314 contribute to the D-glyceraldehyde 3-phosphate site. The Nucleophile role is filled by Cys233. Asn396 contacts NADP(+).

It belongs to the glyceraldehyde-3-phosphate dehydrogenase family. In terms of assembly, homotetramer.

The protein resides in the plastid. It is found in the chloroplast. The catalysed reaction is D-glyceraldehyde 3-phosphate + phosphate + NADP(+) = (2R)-3-phospho-glyceroyl phosphate + NADPH + H(+). Its pathway is carbohydrate biosynthesis; Calvin cycle. This is Glyceraldehyde-3-phosphate dehydrogenase, chloroplastic (GAPA) from Gracilaria gracilis (Red alga).